We begin with the raw amino-acid sequence, 372 residues long: Serine proteinase inhibitor 1 (372 aa).

Belongs to the serpin family. Poxviruses subfamily.

It is found in the host cytoplasm. Its function is as follows. Plays a role in mediating viral host range. May act to inhibit a caspase independent form of apoptosis to allow efficient virus replication in infected cells. The polypeptide is Serine proteinase inhibitor 1 (OPG208) (Homo sapiens (Human)).